Reading from the N-terminus, the 322-residue chain is MFYYPGKEQKVCDICGVKVGGQPGEYPTVLAGTIFYAGHKIVKDEDKGIFDEEAAEELIKMEEELADETGNPMMAHIMGESEEAIIRYLDWVADVTDAPIIVDSTEAEVKVAAVKHAQEVGLAERVVYNSINASVEDEEIQAIKESDCNSAIVLAFNPMDASVEGRMKILTEGEEGVSEKGMLEISDECGIENPLIDTAYTPFGSGAGTAYKVTLAVKAKLGLPVGGAPHNVPSAWDWLRDFMKKLKEEGKEEWAELAHESSDWGSNVVAATLCCDYLLFGPIENAPAIWPVVAMVDALIVEANEDVGVEPQVEEHPANIVR.

This sequence belongs to the MtrH family. As to quaternary structure, the complex is composed of 8 subunits; MtrA, MtrB, MtrC, MtrD, MtrE, MtrF, MtrG and MtrH.

It carries out the reaction 5-methyl-5,6,7,8-tetrahydromethanopterin + coenzyme M + 2 Na(+)(in) = 5,6,7,8-tetrahydromethanopterin + methyl-coenzyme M + 2 Na(+)(out). It participates in one-carbon metabolism; methanogenesis from CO(2); methyl-coenzyme M from 5,10-methylene-5,6,7,8-tetrahydromethanopterin: step 2/2. Its function is as follows. Part of a complex that catalyzes the formation of methyl-coenzyme M and tetrahydromethanopterin from coenzyme M and methyl-tetrahydromethanopterin. This is an energy-conserving, sodium-ion translocating step. MtrH catalyzes the transfer of the methyl group from methyl-tetrahydromethanopterin to the corrinoid prosthetic group of MtrA. The chain is Tetrahydromethanopterin S-methyltransferase subunit H from Methanopyrus kandleri (strain AV19 / DSM 6324 / JCM 9639 / NBRC 100938).